Consider the following 155-residue polypeptide: Large ribosomal subunit protein eL24 (155 aa).

Residues 93–123 (KRNARPETRNATRAKHAEAAKERKEKEAERR) are compositionally biased toward basic and acidic residues. Residues 93-155 (KRNARPETRN…SAPKVQATSR (63 aa)) form a disordered region.

The protein belongs to the eukaryotic ribosomal protein eL24 family.

In Yarrowia lipolytica (strain CLIB 122 / E 150) (Yeast), this protein is Large ribosomal subunit protein eL24 (RPL24).